The following is a 596-amino-acid chain: Leucine zipper putative tumor suppressor 1 (596 aa).

Residue Gly2 is the site of N-myristoyl glycine attachment. Disordered stretches follow at residues 136–193 (AILH…SYQL) and 295–324 (YEERPRRCRDELEGPEPKGGNKLKQASQKS). Residues 153–162 (PPDKPKEQEL) show a composition bias toward basic and acidic residues. Over residues 178–190 (SMSSLPTHSTSSS) the composition is skewed to low complexity. Positions 256 to 374 (ISTDECSIQE…SYEREKTSFG (119 aa)) form a coiled coil. Basic and acidic residues predominate over residues 295 to 310 (YEERPRRCRDELEGPE).

Belongs to the LZTS family. In terms of assembly, binds EEF1G, TLK2 and CDK1. Phosphorylated on serine residues. Hyperphosphorylated by the cAMP-dependent kinase PKA during cell-cycle progression. As to expression, highly expressed in testis, prostate, spleen, thymus, ovary and brain. Detected at lower levels in heart, placenta, small intestine, colon, liver, kidney, skeletal muscle and pancreas. Not detectable in primary tumors from breast and prostate and in many cancer cell lines.

It localises to the cytoplasm. Its subcellular location is the cell membrane. The protein resides in the cell projection. The protein localises to the dendritic spine. It is found in the postsynaptic density. It localises to the synapse. Involved in the regulation of cell growth. May stabilize the active CDC2-cyclin B1 complex and thereby contribute to the regulation of the cell cycle and the prevention of uncontrolled cell proliferation. May act as a tumor suppressor. The sequence is that of Leucine zipper putative tumor suppressor 1 (LZTS1) from Homo sapiens (Human).